A 396-amino-acid polypeptide reads, in one-letter code: CCA-adding enzyme (396 aa).

ATP contacts are provided by Gly27 and Arg30. CTP is bound by residues Gly27 and Arg30. Mg(2+)-binding residues include Asp40 and Asp42. 5 residues coordinate ATP: Arg111, Asp154, Arg157, Arg160, and Arg163. The CTP site is built by Arg111, Asp154, Arg157, Arg160, and Arg163.

It belongs to the tRNA nucleotidyltransferase/poly(A) polymerase family. Bacterial CCA-adding enzyme type 3 subfamily. As to quaternary structure, homodimer. Mg(2+) serves as cofactor.

It catalyses the reaction a tRNA precursor + 2 CTP + ATP = a tRNA with a 3' CCA end + 3 diphosphate. The catalysed reaction is a tRNA with a 3' CCA end + 2 CTP + ATP = a tRNA with a 3' CCACCA end + 3 diphosphate. Catalyzes the addition and repair of the essential 3'-terminal CCA sequence in tRNAs without using a nucleic acid template. Adds these three nucleotides in the order of C, C, and A to the tRNA nucleotide-73, using CTP and ATP as substrates and producing inorganic pyrophosphate. tRNA 3'-terminal CCA addition is required both for tRNA processing and repair. Also involved in tRNA surveillance by mediating tandem CCA addition to generate a CCACCA at the 3' terminus of unstable tRNAs. While stable tRNAs receive only 3'-terminal CCA, unstable tRNAs are marked with CCACCA and rapidly degraded. This is CCA-adding enzyme from Bacillus velezensis (strain DSM 23117 / BGSC 10A6 / LMG 26770 / FZB42) (Bacillus amyloliquefaciens subsp. plantarum).